The following is a 674-amino-acid chain: Penicillin-binding protein activator LpoA (674 aa).

An N-terminal signal peptide occupies residues 1–31 (MLSSTFVRTKAGRSKPVRLTAVIAAALFLAG). Residue Cys-32 is the site of N-palmitoyl cysteine attachment. Cys-32 is lipidated: S-diacylglycerol cysteine. Positions 291–349 (GVTPSTPVQQQQPASVPEQAAQPASTDPNANGAVSTSAPDAAPVTAAQPSAPSTAPITP) are disordered. Low complexity predominate over residues 292–315 (VTPSTPVQQQQPASVPEQAAQPAS). Polar residues predominate over residues 316–328 (TDPNANGAVSTSA). A compositionally biased stretch (low complexity) spans 331-349 (AAPVTAAQPSAPSTAPITP).

The protein belongs to the LpoA family. Interacts with PBP1a.

It localises to the cell outer membrane. Its function is as follows. Regulator of peptidoglycan synthesis that is essential for the function of penicillin-binding protein 1A (PBP1a). The protein is Penicillin-binding protein activator LpoA of Serratia proteamaculans (strain 568).